Consider the following 2075-residue polypeptide: Autophagy-related protein 2 homolog B (2075 aa).

The 95-residue stretch at 13–107 (ACRYLLQRYL…LEMVFRPRPR (95 aa)) folds into the Chorein N-terminal domain. Phosphoserine occurs at positions 255, 379, 496, 839, 885, 898, and 1007. Tyr1011 is subject to Phosphotyrosine. Phosphoserine is present on residues Ser1015 and Ser1017. Thr1021 is subject to Phosphothreonine. The tract at residues 1373–1403 (KAEMKPGVPQRKPKVDSSARSSSHGPVLPEA) is disordered. Position 1525 is a phosphoserine (Ser1525). Disordered regions lie at residues 1570-1593 (TSPAKSYIPHSSPSQTPTRHGRHT), 1759-1792 (EPNLVVSFPGPKQASPNHRANSAEGGNGLEEDVS), and 2055-2075 (RNQIRPDVRQDESQKWRHGED). A compositionally biased stretch (polar residues) spans 1578 to 1587 (PHSSPSQTPT). Residues 2058-2075 (IRPDVRQDESQKWRHGED) are compositionally biased toward basic and acidic residues.

The protein belongs to the ATG2 family. Interacts with WDR45/WIPI4.

The protein localises to the preautophagosomal structure membrane. It localises to the lipid droplet. It is found in the endoplasmic reticulum membrane. The catalysed reaction is a 1,2-diacyl-sn-glycero-3-phospho-L-serine(in) = a 1,2-diacyl-sn-glycero-3-phospho-L-serine(out). The enzyme catalyses a 1,2-diacyl-sn-glycero-3-phosphoethanolamine(in) = a 1,2-diacyl-sn-glycero-3-phosphoethanolamine(out). Functionally, lipid transfer protein required for both autophagosome formation and regulation of lipid droplet morphology and dispersion. Tethers the edge of the isolation membrane (IM) to the endoplasmic reticulum (ER) and mediates direct lipid transfer from ER to IM for IM expansion. Binds to the ER exit site (ERES), which is the membrane source for autophagosome formation, and extracts phospholipids from the membrane source and transfers them to ATG9 (ATG9A or ATG9B) to the IM for membrane expansion. Lipid transfer activity is enhanced by WDR45/WIPI4, which promotes ATG2B-association with phosphatidylinositol 3-monophosphate (PI3P)-containing membranes. This is Autophagy-related protein 2 homolog B from Mus musculus (Mouse).